The primary structure comprises 81 residues: Adipogenin (81 aa).

A helical membrane pass occupies residues 16-36; sequence FLVFWLCLPVALLLFLLIIWL.

Belongs to the adipogenin family. Highly expressed in subcutaneous, perirenal and mesecentric adipose tissue.

It is found in the membrane. Its subcellular location is the nucleus. In terms of biological role, plays a role in stimulating adipocyte differentiation and development. The chain is Adipogenin from Bos taurus (Bovine).